The primary structure comprises 329 residues: R-linalool synthase (329 aa).

Asp-79 contributes to the Mg(2+) binding site. Positions 79–83 (DDQFD) match the DDXXD motif motif. Arg-172 contacts substrate. Mg(2+) is bound by residues Asn-218 and Ser-222. The NXXXSXXXD motif motif lies at 218-226 (NELHSFEKD). Lys-225 provides a ligand contact to substrate. Position 226 (Asp-226) interacts with Mg(2+). Position 308-309 (308-309 (RY)) interacts with substrate.

Belongs to the terpene synthase family. In terms of assembly, homodimer. It depends on Mg(2+) as a cofactor.

The catalysed reaction is (2E)-geranyl diphosphate + H2O = (R)-linalool + diphosphate. It carries out the reaction (2E,6E)-farnesyl diphosphate + H2O = (6E)-nerolidol + diphosphate. Functionally, in vitro, catalyzes the formation of R-linalool from geranyl diphosphate (GPP). Can also accept farnesyl diphosphate (FPP) as substrate to produce trans-nerolidol. This chain is R-linalool synthase, found in Streptomyces clavuligerus.